A 156-amino-acid polypeptide reads, in one-letter code: Small ribosomal subunit protein uS7 (156 aa).

It belongs to the universal ribosomal protein uS7 family. As to quaternary structure, part of the 30S ribosomal subunit. Contacts proteins S9 and S11.

Functionally, one of the primary rRNA binding proteins, it binds directly to 16S rRNA where it nucleates assembly of the head domain of the 30S subunit. Is located at the subunit interface close to the decoding center, probably blocks exit of the E-site tRNA. In Oleidesulfovibrio alaskensis (strain ATCC BAA-1058 / DSM 17464 / G20) (Desulfovibrio alaskensis), this protein is Small ribosomal subunit protein uS7.